The sequence spans 70 residues: UPF0352 protein PSHAa1818 (70 aa).

This sequence belongs to the UPF0352 family.

In Pseudoalteromonas translucida (strain TAC 125), this protein is UPF0352 protein PSHAa1818.